A 577-amino-acid polypeptide reads, in one-letter code: Arginine--tRNA ligase (577 aa).

The short motif at 132–142 (ANPTGPLHVGH) is the 'HIGH' region element.

Belongs to the class-I aminoacyl-tRNA synthetase family. Monomer.

Its subcellular location is the cytoplasm. The catalysed reaction is tRNA(Arg) + L-arginine + ATP = L-arginyl-tRNA(Arg) + AMP + diphosphate. The protein is Arginine--tRNA ligase of Janthinobacterium sp. (strain Marseille) (Minibacterium massiliensis).